Reading from the N-terminus, the 199-residue chain is COMM domain-containing protein 2 (199 aa).

In terms of domain architecture, COMM spans 123–190 (SYHNLEWRLD…QALEEMKTNH (68 aa)).

Belongs to the COMM domain-containing protein 2 family. As to quaternary structure, component of the commander complex consisting of the CCC subcomplex and the retriever subcomplex. Component of the CCC (COMMD/CCDC22/CCDC93) subcomplex consisting of COMMD1, COMMD2, COMMD3, COMMD4, COMMD5, COMMD6, COMMD7, COMMD8, COMMD9, COMMD10, CCDC22 and CCDC93; within the complex forms a heterodimer with COMMD3. Interacts with RELA, RELB, NFKB1/p105, NFKB2/p100. Interacts with CCDC22, CCDC93, SCNN1B, CUL3, CUL4B, CUL5, CUL7. In terms of tissue distribution, ubiquitous.

Its subcellular location is the cytoplasm. Its function is as follows. Scaffold protein in the commander complex that is essential for endosomal recycling of transmembrane cargos; the commander complex is composed of the CCC subcomplex and the retriever subcomplex. May modulate activity of cullin-RING E3 ubiquitin ligase (CRL) complexes. May down-regulate activation of NF-kappa-B. The protein is COMM domain-containing protein 2 (COMMD2) of Homo sapiens (Human).